Here is a 556-residue protein sequence, read N- to C-terminus: Cell wall integrity and stress response component 3 (556 aa).

The first 38 residues, 1-38, serve as a signal peptide directing secretion; sequence MERVWFAKLTNKGTIKIGYISFILLSLLCQSLIGLVNA. One can recognise a WSC domain in the interval 39–132; sequence DFNYEGCYSA…SSYMNVYVNA (94 aa). Topologically, residues 39-384 are extracellular; the sequence is DFNYEGCYSA…QRLSGGAIAG (346 aa). N-linked (GlcNAc...) asparagine glycosylation is present at asparagine 84. 2 stretches are compositionally biased toward low complexity: residues 142–169 and 184–257; these read SSSKEGSSTSYMPSTTSSLSSAQISSTT and TTVS…STTS. 2 disordered regions span residues 142-257 and 269-312; these read SSSK…STTS and TLSS…PSTS. Asparagine 367 and asparagine 370 each carry an N-linked (GlcNAc...) asparagine glycan. The helical transmembrane segment at 385 to 405 threads the bilayer; it reads IVIGVVFGVIFIILILLFLIW. The Cytoplasmic segment spans residues 406–556; sequence RRRKSHDQLD…LSSTVSHNRA (151 aa). Disordered stretches follow at residues 425 to 444 and 534 to 556; these read YSFGDEDANPIGPPPSSGTT and LQVVNPDNPDNPELSSTVSHNRA. Residues 546–556 show a composition bias toward polar residues; it reads ELSSTVSHNRA.

Its subcellular location is the membrane. This is Cell wall integrity and stress response component 3 (WSC3) from Saccharomyces cerevisiae (strain ATCC 204508 / S288c) (Baker's yeast).